Here is an 826-residue protein sequence, read N- to C-terminus: Glycerol-3-phosphate acyltransferase 1, mitochondrial (826 aa).

Over 1-87 the chain is Cytoplasmic; the sequence is MDESALTLGT…FFNPSIPSLG (87 aa). The important for mitochondrial localization stretch occupies residues 80 to 120; it reads NPSIPSLGLRNVIYINETHTRHRGWLARRLSYVLFIQERDV. Residues 88-118 lie within the membrane without spanning it; that stretch reads LRNVIYINETHTRHRGWLARRLSYVLFIQER. Over 119 to 826 the chain is Cytoplasmic; sequence DVHKGMFATN…LEYILSFVVL (708 aa). The HXXXXD motif motif lies at 230–235; that stretch reads HRSHID. CoA-binding residues include Arg-278, Arg-279, Lys-288, Arg-293, and Arg-328. Position 380 is a phosphoserine (Ser-380). Arg-462 is a CoA binding site. A phosphoserine mark is found at Ser-686 and Ser-693. 2 positions are modified to N6-acetyllysine: Lys-778 and Lys-782.

It belongs to the GPAT/DAPAT family.

The protein localises to the mitochondrion outer membrane. The enzyme catalyses sn-glycerol 3-phosphate + an acyl-CoA = a 1-acyl-sn-glycero-3-phosphate + CoA. It catalyses the reaction (9Z,12Z)-octadecadienoyl-CoA + sn-glycerol 3-phosphate = 1-(9Z,12Z)-octadecadienoyl-sn-glycero-3-phosphate + CoA. The catalysed reaction is sn-glycerol 3-phosphate + (9Z)-octadecenoyl-CoA = 1-(9Z-octadecenoyl)-sn-glycero-3-phosphate + CoA. It carries out the reaction sn-glycerol 3-phosphate + octadecanoyl-CoA = 1-octadecanoyl-sn-glycero-3-phosphate + CoA. The enzyme catalyses sn-glycerol 3-phosphate + hexadecanoyl-CoA = 1-hexadecanoyl-sn-glycero-3-phosphate + CoA. It catalyses the reaction dodecanoyl-CoA + sn-glycerol 3-phosphate = 1-dodecanoyl-sn-glycerol 3-phosphate + CoA. The catalysed reaction is 1-acyl-sn-glycero-3-phospho-(1'-sn-glycerol) + an acyl-CoA = a 1,2-diacyl-sn-glycero-3-phospho-(1'-sn-glycerol) + CoA. The protein operates within phospholipid metabolism; CDP-diacylglycerol biosynthesis; CDP-diacylglycerol from sn-glycerol 3-phosphate: step 1/3. Mitochondrial membrane protein that catalyzes the essential first step of biosynthesis of glycerolipids such as triglycerides, phosphatidic acids and lysophosphatidic acids. Esterifies acyl-group from acyl-coenzyme A (acyl-CoA) to the sn-1 position of glycerol-3-phosphate, to produce lysophosphatidic acid. Has a narrow hydrophobic binding cleft that selects for a linear acyl chain. Catalytic activity is higher for substrates with a 16-carbon acyl chain. This is Glycerol-3-phosphate acyltransferase 1, mitochondrial from Sus scrofa (Pig).